The following is a 439-amino-acid chain: Methylenetetrahydrofolate--tRNA-(uracil-5-)-methyltransferase TrmFO (439 aa).

9 to 14 (GAGLAG) is a binding site for FAD.

This sequence belongs to the MnmG family. TrmFO subfamily. Requires FAD as cofactor.

It is found in the cytoplasm. It catalyses the reaction uridine(54) in tRNA + (6R)-5,10-methylene-5,6,7,8-tetrahydrofolate + NADH + H(+) = 5-methyluridine(54) in tRNA + (6S)-5,6,7,8-tetrahydrofolate + NAD(+). The enzyme catalyses uridine(54) in tRNA + (6R)-5,10-methylene-5,6,7,8-tetrahydrofolate + NADPH + H(+) = 5-methyluridine(54) in tRNA + (6S)-5,6,7,8-tetrahydrofolate + NADP(+). Catalyzes the folate-dependent formation of 5-methyl-uridine at position 54 (M-5-U54) in all tRNAs. This is Methylenetetrahydrofolate--tRNA-(uracil-5-)-methyltransferase TrmFO from Lactobacillus delbrueckii subsp. bulgaricus (strain ATCC BAA-365 / Lb-18).